Consider the following 945-residue polypeptide: Kinesin-like protein CIN8 (945 aa).

The region spanning N22–I409 is the Kinesin motor domain. G114 to T121 lines the ATP pocket. Positions I190–E243 are disordered. Over residues S193 to S208 the composition is skewed to low complexity. Over residues M234–E243 the composition is skewed to polar residues. Coiled-coil stretches lie at residues M450–E562 and L634–Q675.

Belongs to the TRAFAC class myosin-kinesin ATPase superfamily. Kinesin family. BimC subfamily.

Its subcellular location is the cytoplasm. The protein resides in the cytoskeleton. The protein localises to the spindle. In terms of biological role, elongates the mitotic spindle by interacting with spindle microtubules to generate an outward force pushing spindle poles apart. Following spindle assembly, CIN8 and KIP1 apparently act to oppose a force, possibly generated by KAR3, that draws separated poles back together. In Eremothecium gossypii (strain ATCC 10895 / CBS 109.51 / FGSC 9923 / NRRL Y-1056) (Yeast), this protein is Kinesin-like protein CIN8 (CIN8).